Here is a 133-residue protein sequence, read N- to C-terminus: Phosphoribosyl-AMP cyclohydrolase (133 aa).

Asp82 contacts Mg(2+). Residue Cys83 coordinates Zn(2+). Residues Asp84 and Asp86 each contribute to the Mg(2+) site. Zn(2+) is bound by residues Cys99 and Cys106.

The protein belongs to the PRA-CH family. Homodimer. Requires Mg(2+) as cofactor. Zn(2+) serves as cofactor.

Its subcellular location is the cytoplasm. It carries out the reaction 1-(5-phospho-beta-D-ribosyl)-5'-AMP + H2O = 1-(5-phospho-beta-D-ribosyl)-5-[(5-phospho-beta-D-ribosylamino)methylideneamino]imidazole-4-carboxamide. It participates in amino-acid biosynthesis; L-histidine biosynthesis; L-histidine from 5-phospho-alpha-D-ribose 1-diphosphate: step 3/9. Functionally, catalyzes the hydrolysis of the adenine ring of phosphoribosyl-AMP. The sequence is that of Phosphoribosyl-AMP cyclohydrolase from Rhodospirillum centenum (strain ATCC 51521 / SW).